We begin with the raw amino-acid sequence, 415 residues long: Gamma-glutamyl phosphate reductase (415 aa).

This sequence belongs to the gamma-glutamyl phosphate reductase family.

The protein localises to the cytoplasm. The catalysed reaction is L-glutamate 5-semialdehyde + phosphate + NADP(+) = L-glutamyl 5-phosphate + NADPH + H(+). Its pathway is amino-acid biosynthesis; L-proline biosynthesis; L-glutamate 5-semialdehyde from L-glutamate: step 2/2. Functionally, catalyzes the NADPH-dependent reduction of L-glutamate 5-phosphate into L-glutamate 5-semialdehyde and phosphate. The product spontaneously undergoes cyclization to form 1-pyrroline-5-carboxylate. This is Gamma-glutamyl phosphate reductase from Clostridium perfringens (strain SM101 / Type A).